The sequence spans 315 residues: Fe(3+)-citrate-binding protein YfmC (315 aa).

An N-terminal signal peptide occupies residues 1–18 (MRTYSNKLIAIMSVLLLA). A lipid anchor (N-palmitoyl cysteine) is attached at cysteine 19. A lipid anchor (S-diacylglycerol cysteine) is attached at cysteine 19. A compositionally biased stretch (low complexity) spans 27–36 (SSQNNNGSGK). Residues 27–52 (SSQNNNGSGKSESKDSRVIHDEEGKT) form a disordered region. The segment covering 37-51 (SESKDSRVIHDEEGK) has biased composition (basic and acidic residues). Residues 60 to 315 (RVVVLELSFL…KDVLKKVYNK (256 aa)) form the Fe/B12 periplasmic-binding domain.

Belongs to the bacterial solute-binding protein 8 family. In terms of assembly, the complex is composed of one ATP-binding protein (YfmF), two transmembrane proteins (YfmD and YfmE) and a solute-binding protein (YfmC).

It localises to the cell membrane. Part of the ABC transporter complex YfmCDEF involved in citrate-dependent Fe(3+) import. Binds citrate-dependent Fe(3+) and delivers it to the surface of YfmDE. The sequence is that of Fe(3+)-citrate-binding protein YfmC (yfmC) from Bacillus subtilis (strain 168).